A 421-amino-acid chain; its full sequence is Testin (421 aa).

The 108-residue stretch at 92–199 (MILTNPVAAK…GDVKLPCEMD (108 aa)) folds into the PET domain. The segment at 133–164 (EKQPVAGSEGAQYRKKQLAKQLPAHDQDPSKC) is disordered. Positions 155–164 (PAHDQDPSKC) are enriched in basic and acidic residues. LIM zinc-binding domains lie at 234–297 (YSCY…CDSE), 299–359 (PRCA…NHAV), and 362–421 (QGCH…KMMS).

It belongs to the prickle / espinas / testin family. Interacts via LIM domain 1 with ZYX. Interacts (via LIM domain 3) with ENAH and VASP. Interacts with ALKBH4, talin, actin, alpha-actinin, GRIP1 and PXN. Interacts (via LIM domain 2) with ACTL7A (via N-terminus). Heterodimer with ACTL7A; the heterodimer interacts with ENAH to form a heterotrimer.

The protein localises to the cytoplasm. It localises to the cell junction. It is found in the focal adhesion. Functionally, scaffold protein that may play a role in cell adhesion, cell spreading and in the reorganization of the actin cytoskeleton. Plays a role in the regulation of cell proliferation. May act as a tumor suppressor. This chain is Testin (TES), found in Ateles geoffroyi (Black-handed spider monkey).